The following is a 79-amino-acid chain: Cell division protein ZapB (79 aa).

Residues phenylalanine 6 to glutamate 78 are a coiled coil.

It belongs to the ZapB family. As to quaternary structure, homodimer. The ends of the coiled-coil dimer bind to each other, forming polymers. Interacts with FtsZ.

The protein localises to the cytoplasm. In terms of biological role, non-essential, abundant cell division factor that is required for proper Z-ring formation. It is recruited early to the divisome by direct interaction with FtsZ, stimulating Z-ring assembly and thereby promoting cell division earlier in the cell cycle. Its recruitment to the Z-ring requires functional FtsA or ZipA. The sequence is that of Cell division protein ZapB from Yersinia enterocolitica serotype O:8 / biotype 1B (strain NCTC 13174 / 8081).